Reading from the N-terminus, the 274-residue chain is Large ribosomal subunit protein uL2cz/uL2cy (274 aa).

The tract at residues 225-274 (PVDHPHGGGEGRAPIGRKKPVTPWGYPALGRRSRKRKKYSDNLILRRRTK) is disordered.

Belongs to the universal ribosomal protein uL2 family. In terms of assembly, part of the 50S ribosomal subunit.

Its subcellular location is the plastid. The protein resides in the chloroplast. This is Large ribosomal subunit protein uL2cz/uL2cy (rpl2-A) from Lotus japonicus (Lotus corniculatus var. japonicus).